We begin with the raw amino-acid sequence, 166 residues long: Regulatory protein RecX (166 aa).

This sequence belongs to the RecX family.

Its subcellular location is the cytoplasm. Modulates RecA activity. The protein is Regulatory protein RecX of Salmonella choleraesuis (strain SC-B67).